Reading from the N-terminus, the 1594-residue chain is Transcription factor Gibbin (1594 aa).

4 disordered regions span residues Pro19–Asp111, Leu149–Ala241, Gln256–Gly307, and Cys367–Lys464. Residues Gly30–Pro47 are compositionally biased toward pro residues. Lys79 is subject to N6-acetyllysine. Positions Ser165–Arg177 are enriched in polar residues. The span at Ser178 to Ser193 shows a compositional bias: basic and acidic residues. Positions Pro228–Asp240 are enriched in acidic residues. A Phosphoserine modification is found at Ser267. Residues Pro272–Ala303 show a composition bias toward low complexity. Positions Ile391–Gly401 are enriched in basic residues. Residues Arg395–Gly407 constitute a DNA-binding region (a.T hook 1). Pro residues predominate over residues Glu427–Glu447. The a.T hook 2 DNA-binding region spans Lys541–Leu553. Positions Met578–Asp604 are disordered. Phosphoserine is present on Ser593. Lys606 participates in a covalent cross-link: Glycyl lysine isopeptide (Lys-Gly) (interchain with G-Cter in SUMO2). Positions Leu714–Gly789 are disordered. Residues Lys734–Lys743 show a composition bias toward basic residues. A phosphoserine mark is found at Ser825 and Ser842. Omega-N-methylarginine is present on Arg887. Ser892 bears the Phosphoserine mark. The disordered stretch occupies residues Lys942–Tyr967. At Ser1060 the chain carries Phosphoserine. Disordered regions lie at residues Val1152 to Leu1191 and Ser1245 to Gly1306. Low complexity-rich tracts occupy residues Ser1153–Gln1168, Ser1180–Leu1191, and Ser1245–Pro1264. Residue Ser1180 is modified to Phosphoserine. Residues Ser1315, Ser1317, and Ser1392 each carry the phosphoserine modification. Thr1394 bears the Phosphothreonine mark. A Phosphoserine modification is found at Ser1396. Residue Lys1402 forms a Glycyl lysine isopeptide (Lys-Gly) (interchain with G-Cter in SUMO2) linkage. Positions His1495–Ala1525 are disordered. Residues Ser1498 and Ser1540 each carry the phosphoserine modification.

It localises to the nucleus. The protein resides in the chromosome. Functionally, transcription factor required for the proper patterning of the epidermis, which plays a key role in early epithelial morphogenesis. Directly binds promoter and enhancer regions and acts by maintaining local enhancer-promoter chromatin architecture. Interacts with many sequence-specific zinc-finger transcription factors and methyl-CpG-binding proteins to regulate the expression of mesoderm genes that wire surface ectoderm stratification. The sequence is that of Transcription factor Gibbin from Mus musculus (Mouse).